Here is a 250-residue protein sequence, read N- to C-terminus: tRNA (guanine-N(1)-)-methyltransferase (250 aa).

S-adenosyl-L-methionine-binding positions include Gly113 and 133-138 (IGDYVL).

This sequence belongs to the RNA methyltransferase TrmD family. In terms of assembly, homodimer.

The protein resides in the cytoplasm. The enzyme catalyses guanosine(37) in tRNA + S-adenosyl-L-methionine = N(1)-methylguanosine(37) in tRNA + S-adenosyl-L-homocysteine + H(+). Its function is as follows. Specifically methylates guanosine-37 in various tRNAs. In Photorhabdus laumondii subsp. laumondii (strain DSM 15139 / CIP 105565 / TT01) (Photorhabdus luminescens subsp. laumondii), this protein is tRNA (guanine-N(1)-)-methyltransferase.